A 158-amino-acid chain; its full sequence is SsrA-binding protein (158 aa).

This sequence belongs to the SmpB family.

The protein localises to the cytoplasm. In terms of biological role, required for rescue of stalled ribosomes mediated by trans-translation. Binds to transfer-messenger RNA (tmRNA), required for stable association of tmRNA with ribosomes. tmRNA and SmpB together mimic tRNA shape, replacing the anticodon stem-loop with SmpB. tmRNA is encoded by the ssrA gene; the 2 termini fold to resemble tRNA(Ala) and it encodes a 'tag peptide', a short internal open reading frame. During trans-translation Ala-aminoacylated tmRNA acts like a tRNA, entering the A-site of stalled ribosomes, displacing the stalled mRNA. The ribosome then switches to translate the ORF on the tmRNA; the nascent peptide is terminated with the 'tag peptide' encoded by the tmRNA and targeted for degradation. The ribosome is freed to recommence translation, which seems to be the essential function of trans-translation. The chain is SsrA-binding protein from Roseiflexus sp. (strain RS-1).